Here is a 239-residue protein sequence, read N- to C-terminus: Probable transcriptional regulatory protein BCAH187_A0615 (239 aa).

Belongs to the TACO1 family. YeeN subfamily.

It is found in the cytoplasm. This is Probable transcriptional regulatory protein BCAH187_A0615 from Bacillus cereus (strain AH187).